Consider the following 900-residue polypeptide: DNA polymerase nu (900 aa).

The span at 60–75 shows a compositional bias: basic and acidic residues; that stretch reads LEDRKTQSPEKKDLKS. Disordered regions lie at residues 60 to 90 and 863 to 900; these read LEDR…LSPQ and GPPP…SFCL. The segment covering 76-90 has biased composition (polar residues); sequence LRSQTSRGSAKLSPQ.

This sequence belongs to the DNA polymerase type-A family. As to quaternary structure, interacts with FANCD2, FANCI, PCNA, RAD51 and HELQ. As to expression, highly expressed in testis and heart. Weakly expressed in skeletal muscle.

It is found in the nucleus. The catalysed reaction is DNA(n) + a 2'-deoxyribonucleoside 5'-triphosphate = DNA(n+1) + diphosphate. Inhibited by ddTTP. Its function is as follows. DNA polymerase with very low fidelity that catalyzes considerable misincorporation by inserting dTTP opposite a G template, and dGTP opposite a T template. Is the least accurate of the DNA polymerase A family (i.e. POLG, POLN and POLQ). Can perform accurate translesion DNA synthesis (TLS) past a 5S-thymine glycol. Can perform efficient strand displacement past a nick or a gap and gives rise to an amount of product similar to that on non-damaged template. Has no exonuclease activity. Error-prone DNA polymerase that preferentially misincorporates dT regardless of template sequence. May play a role in TLS during interstrand cross-link (ICL) repair. May be involved in TLS when genomic replication is blocked by extremely large major groove DNA lesions. May function in the bypass of some DNA-protein and DNA-DNA cross-links. May have a role in cellular tolerance to DNA cross-linking agents. Involved in the repair of DNA cross-links and double-strand break (DSB) resistance. Participates in FANCD2-mediated repair. Forms a complex with HELQ helicase that participates in homologous recombination (HR) repair and is essential for cellular protection against DNA cross-links. The sequence is that of DNA polymerase nu (POLN) from Homo sapiens (Human).